A 148-amino-acid polypeptide reads, in one-letter code: SsrA-binding protein (148 aa).

A compositionally biased stretch (basic and acidic residues) spans 127-142 (KRESEKERDWERDKAR). Residues 127–148 (KRESEKERDWERDKARLMRVKT) form a disordered region.

The protein belongs to the SmpB family.

The protein resides in the cytoplasm. Its function is as follows. Required for rescue of stalled ribosomes mediated by trans-translation. Binds to transfer-messenger RNA (tmRNA), required for stable association of tmRNA with ribosomes. tmRNA and SmpB together mimic tRNA shape, replacing the anticodon stem-loop with SmpB. tmRNA is encoded by the ssrA gene; the 2 termini fold to resemble tRNA(Ala) and it encodes a 'tag peptide', a short internal open reading frame. During trans-translation Ala-aminoacylated tmRNA acts like a tRNA, entering the A-site of stalled ribosomes, displacing the stalled mRNA. The ribosome then switches to translate the ORF on the tmRNA; the nascent peptide is terminated with the 'tag peptide' encoded by the tmRNA and targeted for degradation. The ribosome is freed to recommence translation, which seems to be the essential function of trans-translation. This chain is SsrA-binding protein, found in Aromatoleum aromaticum (strain DSM 19018 / LMG 30748 / EbN1) (Azoarcus sp. (strain EbN1)).